We begin with the raw amino-acid sequence, 763 residues long: Dual specificity tyrosine-phosphorylation-regulated kinase 1A (763 aa).

A Phosphoserine modification is found at Ser-14. A disordered region spans residues 32-57 (GQMPHSHQYSDRRQPNISDQQVSALS). Residues 46–57 (PNISDQQVSALS) are compositionally biased toward polar residues. Tyr-111 bears the Phosphotyrosine; by autocatalysis mark. Residues 115–136 (KKRRHQQGQGDDSSHKKERKVY) form a disordered region. The Bipartite nuclear localization signal signature appears at 117 to 134 (RRHQQGQGDDSSHKKERK). A Phosphotyrosine; by autocatalysis modification is found at Tyr-140. A Phosphotyrosine modification is found at Tyr-145. A Phosphotyrosine; by autocatalysis modification is found at Tyr-159. The region spanning 159 to 479 (YEIDSLIGKG…PYYALQHSFF (321 aa)) is the Protein kinase domain. 165–173 (IGKGSFGQV) lines the ATP pocket. Tyr-177 bears the Phosphotyrosine; by autocatalysis mark. Lys-188 serves as a coordination point for ATP. The residue at position 219 (Tyr-219) is a Phosphotyrosine; by autocatalysis. 238–241 (FEML) contacts ATP. Residue Asp-287 is the Proton acceptor of the active site. Ser-310 is subject to Phosphoserine; by autocatalysis. Phosphotyrosine; by autocatalysis occurs at positions 319 and 321. A Phosphothreonine; by autocatalysis modification is found at Thr-402. The tract at residues 408-442 (TKDGKREYKPPGTRKLHNILGVETGGPGGRRAGES) is disordered. Position 449 is a phosphotyrosine; by autocatalysis (Tyr-449). The segment covering 485 to 501 (EGTNTSNSVSTSPAMEQ) has biased composition (polar residues). Disordered stretches follow at residues 485 to 540 (EGTN…HSGG), 596 to 679 (NALH…GNQA), and 744 to 763 (DREESPMTGVCVQQSPVASS). Low complexity predominate over residues 502–525 (SQSSGTTSSTSSSSGGSSGTSNSG). 2 positions are modified to phosphoserine: Ser-529 and Ser-538. The tract at residues 595 to 625 (QNALHHHHGNSSHHHHHHHHHHHHHGQQALG) is histidine-rich domain (HRD). Basic residues predominate over residues 598–620 (LHHHHGNSSHHHHHHHHHHHHHG). Polar residues predominate over residues 634–645 (NSPTNSSSTQDS). Residues 654 to 672 (SMTSLSSSTTSSSTSSSST) are compositionally biased toward low complexity. Phosphoserine is present on residues Ser-748 and Ser-758. Residues 754–763 (CVQQSPVASS) show a composition bias toward polar residues.

The protein belongs to the protein kinase superfamily. CMGC Ser/Thr protein kinase family. MNB/DYRK subfamily. Interacts with RAD54L2/ARIP4. Interacts with CRY2. Interacts with RANBP9. Interacts with WDR68. Interacts with SIRT1. In terms of assembly, (Microbial infection) Interacts with human adenovirus 5 E1A protein. Autophosphorylated on numerous tyrosine residues. Can also autophosphorylate on serine and threonine residues (in vitro). Ubiquitous. Highest levels in skeletal muscle, testis, fetal lung and fetal kidney.

The protein resides in the nucleus. It localises to the nucleus speckle. It carries out the reaction L-seryl-[protein] + ATP = O-phospho-L-seryl-[protein] + ADP + H(+). It catalyses the reaction L-threonyl-[protein] + ATP = O-phospho-L-threonyl-[protein] + ADP + H(+). The catalysed reaction is L-tyrosyl-[protein] + ATP = O-phospho-L-tyrosyl-[protein] + ADP + H(+). The enzyme catalyses [DNA-directed RNA polymerase] + ATP = phospho-[DNA-directed RNA polymerase] + ADP + H(+). Inhibited by RANBP9. Inhibited by harmine, leucettamine B and leucettine L41. In terms of biological role, dual-specificity kinase which possesses both serine/threonine and tyrosine kinase activities. Exhibits a substrate preference for proline at position P+1 and arginine at position P-3. Plays an important role in double-strand breaks (DSBs) repair following DNA damage. Mechanistically, phosphorylates RNF169 and increases its ability to block accumulation of TP53BP1 at the DSB sites thereby promoting homologous recombination repair (HRR). Also acts as a positive regulator of transcription by acting as a CTD kinase that mediates phosphorylation of the CTD (C-terminal domain) of the large subunit of RNA polymerase II (RNAP II) POLR2A. May play a role in a signaling pathway regulating nuclear functions of cell proliferation. Modulates alternative splicing by phosphorylating the splice factor SRSF6. Has pro-survival function and negatively regulates the apoptotic process. Promotes cell survival upon genotoxic stress through phosphorylation of SIRT1. This in turn inhibits p53/TP53 activity and apoptosis. Phosphorylates SEPTIN4, SEPTIN5 and SF3B1 at 'Thr-434'. The polypeptide is Dual specificity tyrosine-phosphorylation-regulated kinase 1A (Homo sapiens (Human)).